Consider the following 482-residue polypeptide: Scarecrow-like protein 3 (482 aa).

A GRAS domain is found at 45–479 (LKPEERGLYL…RPLYSVSAWR (435 aa)). Residues 52–115 (LYLIHLLLTC…ILKSWPGLYK (64 aa)) are leucine repeat I (LRI). The VHIID stretch occupies residues 134 to 199 (RRLFFEMFPI…EGPPHLRITG (66 aa)). Positions 165-169 (VHVID) match the VHIID motif. The leucine repeat II (LRII) stretch occupies residues 209–241 (QMAHRLIEEAEKLDIPFQFNPVVSRLDCLNVEQ). Positions 250–401 (LAVSSVLQLH…KMLFGEEIKN (152 aa)) are PFYRE. The segment at 302–324 (ENDMSNNNGYSPSGDSASSLPLP) is disordered. Positions 305–324 (MSNNNGYSPSGDSASSLPLP) are enriched in polar residues. The tract at residues 404-479 (SCEGFERRER…RPLYSVSAWR (76 aa)) is SAW.

The protein belongs to the GRAS family. Binds to zinc finger proteins MGP/IDD3, IDD4, IDD5, BIB/IDD9 and JKD/IDD10. In terms of tissue distribution, expressed in seedlings, root epidermis, leaves, flowers and siliques.

Its subcellular location is the nucleus. Functionally, probable transcription factor involved in plant development. The chain is Scarecrow-like protein 3 from Arabidopsis thaliana (Mouse-ear cress).